The sequence spans 513 residues: GMP synthase [glutamine-hydrolyzing] (513 aa).

One can recognise a Glutamine amidotransferase type-1 domain in the interval 3–192 (TVVVLDYGSQ…VSKVAKMEKN (190 aa)). The active-site Nucleophile is C80. Active-site residues include H166 and E168. One can recognise a GMPS ATP-PPase domain in the interval 193-388 (WKMTDFIEEK…LGLPDEMINR (196 aa)). 220 to 226 (SGGVDSS) is a binding site for ATP.

Homodimer.

The catalysed reaction is XMP + L-glutamine + ATP + H2O = GMP + L-glutamate + AMP + diphosphate + 2 H(+). The protein operates within purine metabolism; GMP biosynthesis; GMP from XMP (L-Gln route): step 1/1. Functionally, catalyzes the synthesis of GMP from XMP. In Thermosipho africanus (strain TCF52B), this protein is GMP synthase [glutamine-hydrolyzing].